Here is a 630-residue protein sequence, read N- to C-terminus: Kelch-like protein 14 (630 aa).

The BTB domain occupies cysteine 33–leucine 153. The tract at residues glycine 69–leucine 117 is disordered. The segment covering glutamine 84–glutamine 96 has biased composition (low complexity). The 70-residue stretch at valine 212–glutamine 281 folds into the BACK domain. Kelch repeat units follow at residues methionine 325–asparagine 374, phenylalanine 375–lysine 426, histidine 427–glycine 473, isoleucine 475–aspartate 520, leucine 522–aspartate 572, and isoleucine 574–leucine 622.

As to quaternary structure, interacts with TOR1A. As to expression, expressed in the brain, primarily in neurons. In the cerebral cortex, mostly expressed in layers I and II (at protein level). Also observed in some neurons of the corpus striatum (at protein level). Expressed at high levels in the hippocampus, including in pyramidal cells of the CA1 and CA3 layers (at protein level). In the cerebellum, expression in Purkinje cells is higher than in granular cells (at protein level). Also detected in the medial septum, ventral pallidum, thalamus, hypothalamus, amygdala, inferior colliculi, locus caeruleus, peripyramidal nucleus, raphe nucleus, reticular formation, spinal trigeminal nucleus, and vestibular nuclei (at protein level). Low expression, if any, in glial cells (at protein level). Not observed in the corpus callosum.

It localises to the cytoplasm. The protein resides in the cytosol. The protein localises to the endoplasmic reticulum membrane. The sequence is that of Kelch-like protein 14 (Klhl14) from Mus musculus (Mouse).